The sequence spans 895 residues: Receptor-like protein kinase FERONIA (895 aa).

An N-terminal signal peptide occupies residues 1 to 27 (MKITEGRFRLSLLLLLLLISAATLISA). Residues 28–447 (ADYSPTEKIL…TTRKSKSNTA (420 aa)) lie on the Extracellular side of the membrane. N-linked (GlcNAc...) asparagine glycans are attached at residues Asn-46, Asn-124, Asn-142, Asn-171, Asn-219, Asn-269, Asn-305, Asn-330, Asn-345, and Asn-410. Residues 448–468 (IIAGAASGAVVLALIIGFCVF) traverse the membrane as a helical segment. The Cytoplasmic segment spans residues 469–895 (GAYRRRKRGD…FSQIMNPKGR (427 aa)). A Protein kinase domain is found at 536–810 (FDESRVLGVG…GDVLWNLEFA (275 aa)). Residues 542 to 550 (LGVGGFGKV) and Lys-565 each bind ATP. Catalysis depends on Asp-661, which acts as the Proton acceptor. Residues 844–895 (NDKSSDVYEGNVTDSRSSGIDMSIGGRSLASEDSDGLTPSAVFSQIMNPKGR) form a disordered region. Phosphoserine is present on residues Ser-858, Ser-866, Ser-871, and Ser-874. Polar residues predominate over residues 884-895 (AVFSQIMNPKGR).

This sequence belongs to the protein kinase superfamily. Ser/Thr protein kinase family. In terms of assembly, interacts with ROPGEF1. Interacts with RALF1; triggering phosphorylation status and subsequent activation. Interacts with LRE and LLG1. Interacts, via its extracellular domain, with FERONIA at the synergid cell surface. Autophosphorylated. In terms of processing, phosphorylated at Ser-858, Ser-871 and Ser-874 upon activation by RALF1. In terms of tissue distribution, expressed in leaves, buds, flowers, siliques, young ovules primordia, and young anthers with immature pollen, but not detected in mature pollen. Highest expression in the synergid cells of the female gametophyte.

It is found in the cell membrane. It catalyses the reaction L-seryl-[protein] + ATP = O-phospho-L-seryl-[protein] + ADP + H(+). The enzyme catalyses L-threonyl-[protein] + ATP = O-phospho-L-threonyl-[protein] + ADP + H(+). Functionally, receptor-like protein kinase that mediates the female control of male gamete delivery during fertilization, including growth cessation of compatible pollen tubes ensuring a reproductive isolation barriers, by regulating MLO7 subcellular polarization upon pollen tube perception in the female gametophyte synergids. Required for cell elongation during vegetative growth, mostly in a brassinosteroids- (BR-) independent manner. Acts as an upstream regulator for the Rac/Rop-signaling pathway that controls ROS-mediated root hair development. Seems to regulate a cross-talk between brassinosteroids and ethylene signaling pathways during hypocotyl elongation. Negative regulator of brassinosteroid response in light-grown hypocotyls, but required for brassinosteroid response in etiolated seedlings. Mediates sensitivity to powdery mildew (e.g. Golovinomyces orontii). Positive regulator of auxin-promoted growth that represses the abscisic acid (ABA) signaling via the activation of ABI2 phosphatase. Required for RALF1-mediated extracellular alkalinization in a signaling pathway preventing cell expansion. In Arabidopsis thaliana (Mouse-ear cress), this protein is Receptor-like protein kinase FERONIA.